The sequence spans 468 residues: uncharacterized protein (468 aa).

Positions 447-468 (AVHVSNGDKPKVALPDTQLGSH) are disordered.

This sequence belongs to the mycobacterial PPE family.

This is an uncharacterized protein from Mycobacterium tuberculosis (strain CDC 1551 / Oshkosh).